The following is a 256-amino-acid chain: Protein FixA (256 aa).

Belongs to the ETF beta-subunit/FixA family. Heterodimer of FixA and FixB.

It participates in amine and polyamine metabolism; carnitine metabolism. Functionally, required for anaerobic carnitine reduction. May bring reductant to CaiA. The chain is Protein FixA from Escherichia fergusonii (strain ATCC 35469 / DSM 13698 / CCUG 18766 / IAM 14443 / JCM 21226 / LMG 7866 / NBRC 102419 / NCTC 12128 / CDC 0568-73).